The primary structure comprises 1175 residues: DNA-directed RNA polymerase subunit beta (1175 aa).

The disordered stretch occupies residues methionine 1–aspartate 24. A compositionally biased stretch (low complexity) spans valine 7–threonine 23.

The protein belongs to the RNA polymerase beta chain family. The RNAP catalytic core consists of 2 alpha, 1 beta, 1 beta' and 1 omega subunit. When a sigma factor is associated with the core the holoenzyme is formed, which can initiate transcription.

The catalysed reaction is RNA(n) + a ribonucleoside 5'-triphosphate = RNA(n+1) + diphosphate. Its function is as follows. DNA-dependent RNA polymerase catalyzes the transcription of DNA into RNA using the four ribonucleoside triphosphates as substrates. The polypeptide is DNA-directed RNA polymerase subunit beta (Renibacterium salmoninarum (strain ATCC 33209 / DSM 20767 / JCM 11484 / NBRC 15589 / NCIMB 2235)).